We begin with the raw amino-acid sequence, 938 residues long: AP-2 complex subunit alpha-2 (938 aa).

A 1,2-diacyl-sn-glycero-3-phospho-(1D-myo-inositol-3,4,5-trisphosphate)-binding positions include 11 to 12, lysine 43, tyrosine 53, and 57 to 61; these read RG and KYVCK. Positions 616-677 are disordered; it reads LKKKKGPSTV…APPVPAGPPP (62 aa). A compositionally biased stretch (low complexity) spans 645–668; sequence PALASTSAVSTPSPSADLLGLGAA.

This sequence belongs to the adaptor complexes large subunit family. In terms of assembly, adaptor protein complex 2 (AP-2) is a heterotetramer composed of two large adaptins (alpha-type subunit AP2A1 or AP2A2 and beta-type subunit AP2B1), a medium adaptin (mu-type subunit AP2M1) and a small adaptin (sigma-type subunit AP2S1). Binds clathrin. Binds EPN1, EPS15, AMPH, SNAP91 and BIN1. Interacts with HIP1. Interacts with DGKD. Interacts with DENND1A, DENND1B and DENND1C. Interacts with FCHO1. Interacts with ATAT1; this interaction is required for efficient alpha-tubulin acetylation by ATAT1. Interacts with KIAA1107. Together with AP2B1 and AP2M1, it interacts with ADAM10; this interaction facilitates ADAM10 endocytosis from the plasma membrane during long-term potentiation in hippocampal neurons. Interacts with CLN3 (via dileucine motif). Interacts with ABCB11; this interaction regulates cell membrane expression of ABCB11 through its internalization in a clathrin-dependent manner and its subsequent degradation. Interacts with DNAJC6.

Its subcellular location is the cell membrane. It localises to the membrane. The protein resides in the coated pit. Its function is as follows. Component of the adaptor protein complex 2 (AP-2). Adaptor protein complexes function in protein transport via transport vesicles in different membrane traffic pathways. Adaptor protein complexes are vesicle coat components and appear to be involved in cargo selection and vesicle formation. AP-2 is involved in clathrin-dependent endocytosis in which cargo proteins are incorporated into vesicles surrounded by clathrin (clathrin-coated vesicles, CCVs) which are destined for fusion with the early endosome. The clathrin lattice serves as a mechanical scaffold but is itself unable to bind directly to membrane components. Clathrin-associated adaptor protein (AP) complexes which can bind directly to both the clathrin lattice and to the lipid and protein components of membranes are considered to be the major clathrin adaptors contributing the CCV formation. AP-2 also serves as a cargo receptor to selectively sort the membrane proteins involved in receptor-mediated endocytosis. AP-2 seems to play a role in the recycling of synaptic vesicle membranes from the presynaptic surface. AP-2 recognizes Y-X-X-[FILMV] (Y-X-X-Phi) and [ED]-X-X-X-L-[LI] endocytosis signal motifs within the cytosolic tails of transmembrane cargo molecules. AP-2 may also play a role in maintaining normal post-endocytic trafficking through the ARF6-regulated, non-clathrin pathway. During long-term potentiation in hippocampal neurons, AP-2 is responsible for the endocytosis of ADAM10. The AP-2 alpha subunit binds polyphosphoinositide-containing lipids, positioning AP-2 on the membrane. The AP-2 alpha subunit acts via its C-terminal appendage domain as a scaffolding platform for endocytic accessory proteins. The AP-2 alpha and AP-2 sigma subunits are thought to contribute to the recognition of the [ED]-X-X-X-L-[LI] motif. The sequence is that of AP-2 complex subunit alpha-2 from Bos taurus (Bovine).